A 103-amino-acid polypeptide reads, in one-letter code: Co-chaperonin GroES (103 aa).

Belongs to the GroES chaperonin family. Heptamer of 7 subunits arranged in a ring. Interacts with the chaperonin GroEL.

The protein resides in the cytoplasm. Together with the chaperonin GroEL, plays an essential role in assisting protein folding. The GroEL-GroES system forms a nano-cage that allows encapsulation of the non-native substrate proteins and provides a physical environment optimized to promote and accelerate protein folding. GroES binds to the apical surface of the GroEL ring, thereby capping the opening of the GroEL channel. The polypeptide is Co-chaperonin GroES (Synechococcus sp. (strain JA-2-3B'a(2-13)) (Cyanobacteria bacterium Yellowstone B-Prime)).